The chain runs to 883 residues: Receptor-like protein 40 (883 aa).

The first 21 residues, 1-21, serve as a signal peptide directing secretion; sequence MSELLFSLNFLLLLLLSCVSP. Residues 22–846 lie on the Extracellular side of the membrane; that stretch reads SSFFTFNNPV…EDEQVLNWKA (825 aa). 3 N-linked (GlcNAc...) asparagine glycosylation sites follow: asparagine 58, asparagine 91, and asparagine 109. 2 LRR repeats span residues 97-121 and 122-143; these read FHHL…KFGM and LNNL…PFSF. N-linked (GlcNAc...) asparagine glycosylation is present at asparagine 145. 14 LRR repeats span residues 146–169, 170–195, 197–219, 220–244, 246–267, 268–291, 293–316, 317–340, 342–364, 365–390, 391–412, 413–437, 439–462, and 463–486; these read LSML…ARNL, RKLR…LFEL, HIIY…EFGN, LNKL…ISNL, QLTE…VQNL, TKLS…LFTM, FLSY…SSSS, SRLE…ISKL, NLKE…LFSS, LKSL…SYIP, STLE…VFKT, LHNL…LWSL, RLSS…VLVN, and SSVQ…PLSI. 4 N-linked (GlcNAc...) asparagine glycosylation sites follow: asparagine 189, asparagine 207, asparagine 243, and asparagine 266. Residues asparagine 305 and asparagine 312 are each glycosylated (N-linked (GlcNAc...) asparagine). Asparagine 352 is a glycosylation site (N-linked (GlcNAc...) asparagine). N-linked (GlcNAc...) asparagine glycosylation is present at asparagine 462. An LRR 17; degenerate repeat occupies 487–506; sequence NYFSAIDNRFGGDIPLSICN. Residues asparagine 506 and asparagine 519 are each glycosylated (N-linked (GlcNAc...) asparagine). LRR repeat units lie at residues 507–528, 529–552, 554–576, 578–600, 601–624, 627–651, 701–724, 725–747, 748–772, and 774–797; these read RSSL…PPCL, SNLL…YYED, PLRS…LINC, ALQF…LKAL, PKLQ…NEGP, FPEL…FFVN, TSSA…IGLL, KALI…SFAN, LKKM…LRTL, and FLAY…QITG. A glycan (N-linked (GlcNAc...) asparagine) is linked at asparagine 575. Residue asparagine 731 is glycosylated (N-linked (GlcNAc...) asparagine). An N-linked (GlcNAc...) asparagine glycan is attached at asparagine 779. The chain crosses the membrane as a helical span at residues 847–867; the sequence is VAIGYGIGVLLGLAIAQLISL. At 868 to 883 the chain is on the cytoplasmic side; it reads YKPKWLASLVIKSRNC.

This sequence belongs to the RLP family.

The protein localises to the cell membrane. This Arabidopsis thaliana (Mouse-ear cress) protein is Receptor-like protein 40.